The primary structure comprises 166 residues: Ribosome maturation factor RimM (166 aa).

The PRC barrel domain maps to 95–164 (EEEYYAYELV…KKIIVKEELL (70 aa)).

It belongs to the RimM family. As to quaternary structure, binds ribosomal protein uS19.

Its subcellular location is the cytoplasm. Functionally, an accessory protein needed during the final step in the assembly of 30S ribosomal subunit, possibly for assembly of the head region. Essential for efficient processing of 16S rRNA. May be needed both before and after RbfA during the maturation of 16S rRNA. It has affinity for free ribosomal 30S subunits but not for 70S ribosomes. This is Ribosome maturation factor RimM from Aquifex aeolicus (strain VF5).